Consider the following 304-residue polypeptide: tRNA-uridine aminocarboxypropyltransferase 1 (304 aa).

2 disordered regions span residues 1-29 (MALS…QTTS) and 165-193 (RNKA…HEST). Over residues 180-193 (RTTDEEGWDLHEST) the composition is skewed to basic and acidic residues. A DXTW motif is present at residues 206 to 209 (DSTW).

This sequence belongs to the TDD superfamily. DTWD1 family.

It is found in the nucleus. The catalysed reaction is a uridine in tRNA + S-adenosyl-L-methionine = a 3-[(3S)-3-amino-3-carboxypropyl]uridine in tRNA + S-methyl-5'-thioadenosine + H(+). Catalyzes the formation of 3-(3-amino-3-carboxypropyl)uridine (acp3U) at position 20 in the D-loop of several cytoplasmic tRNAs (acp3U(20)). The polypeptide is tRNA-uridine aminocarboxypropyltransferase 1 (Mus musculus (Mouse)).